Consider the following 239-residue polypeptide: Fatty acid metabolism regulator protein (239 aa).

Positions 6-74 (QSPAGFAEEY…HGKPTKVNNF (69 aa)) constitute an HTH gntR-type domain. Positions 34 to 53 (ERELSELIGVTRTTLREVLQ) form a DNA-binding region, H-T-H motif.

In terms of assembly, homodimer.

It is found in the cytoplasm. Functionally, multifunctional regulator of fatty acid metabolism. The sequence is that of Fatty acid metabolism regulator protein from Shigella flexneri.